The sequence spans 1409 residues: L-2-aminoadipate reductase large subunit (1409 aa).

The Carrier domain occupies 858–937 (QALSETEQTL…GFASEIDRLL (80 aa)). O-(pantetheine 4'-phosphoryl)serine is present on S896.

The protein belongs to the ATP-dependent AMP-binding enzyme family. In terms of assembly, heterodimer of an alpha and a beta subunit. The cofactor is pantetheine 4'-phosphate.

It carries out the reaction (S)-2-amino-6-oxohexanoate + NADP(+) + H2O = L-2-aminoadipate + NADPH + 2 H(+). It catalyses the reaction (S)-2-amino-6-oxohexanoate + NAD(+) + H2O = L-2-aminoadipate + NADH + 2 H(+). The enzyme catalyses (S)-2-amino-6-oxohexanoate + AMP + diphosphate + NADP(+) = L-2-aminoadipate + ATP + NADPH + H(+). It functions in the pathway amino-acid biosynthesis; L-lysine biosynthesis via AAA pathway; L-lysine from L-alpha-aminoadipate (fungal route): step 1/3. Functionally, catalyzes the activation of alpha-aminoadipate by ATP-dependent adenylation and the reduction of activated alpha-aminoadipate by NADPH. The activated alpha-aminoadipate is bound to the phosphopantheinyl group of the enzyme itself before it is reduced to (S)-2-amino-6-oxohexanoate. This Penicillium chrysogenum (Penicillium notatum) protein is L-2-aminoadipate reductase large subunit (lys2).